The following is a 334-amino-acid chain: Trans-3-hydroxy-L-proline dehydratase (334 aa).

Cys-91 (proton acceptor) is an active-site residue. Substrate contacts are provided by residues 92-93 (GH), Asp-250, and 255-256 (GT).

The protein belongs to the proline racemase family.

The catalysed reaction is trans-3-hydroxy-L-proline = 1-pyrroline-2-carboxylate + H2O. In terms of biological role, catalyzes the dehydration of trans-3-hydroxy-L-proline (t3LHyp) to Delta(1)-pyrroline-2-carboxylate (Pyr2C). Is likely involved in a degradation pathway that converts t3LHyp to L-proline, which allows B.cereus to grow on t3LHyp as a sole carbon source. Displays no proline racemase activity. In Bacillus cereus (strain ATCC 14579 / DSM 31 / CCUG 7414 / JCM 2152 / NBRC 15305 / NCIMB 9373 / NCTC 2599 / NRRL B-3711), this protein is Trans-3-hydroxy-L-proline dehydratase.